A 33-amino-acid polypeptide reads, in one-letter code: uncharacterized protein (33 aa).

It localises to the cytoplasm. Its subcellular location is the nucleus. This is an uncharacterized protein from Schizosaccharomyces pombe (strain 972 / ATCC 24843) (Fission yeast).